A 250-amino-acid chain; its full sequence is Serine/arginine-rich splicing factor RS31A (250 aa).

2 RRM domains span residues 2 to 74 (RHVY…WAKD) and 95 to 166 (KTLF…YALR). Residues 170–250 (EREDRYAGSR…SRSPIQRARG (81 aa)) form a disordered region. The span at 177-191 (GSRRRRSPSPVYRRR) shows a compositional bias: basic residues. Phosphoserine occurs at positions 183, 185, 201, 218, and 243. Residues 192-230 (PSPDYTRRRSPEYDRYKGPAPYERRKSPDYGRRSSDYGR) are compositionally biased toward basic and acidic residues.

Belongs to the splicing factor SR family. RS subfamily. In terms of assembly, component of the spliceosome. Interacts with MOS14.

The protein localises to the nucleus speckle. The protein resides in the nucleus. It is found in the nucleoplasm. In terms of biological role, probably involved in intron recognition and spliceosome assembly. The chain is Serine/arginine-rich splicing factor RS31A (RS31A) from Arabidopsis thaliana (Mouse-ear cress).